The following is a 78-amino-acid chain: Large ribosomal subunit protein bL28 (78 aa).

A disordered region spans residues 1-22 (MAKVCQVTGKRPVTGHNVSHAK).

It belongs to the bacterial ribosomal protein bL28 family.

This is Large ribosomal subunit protein bL28 from Teredinibacter turnerae (strain ATCC 39867 / T7901).